Consider the following 497-residue polypeptide: Angiopoietin-1 (497 aa).

The first 19 residues, 1-19, serve as a signal peptide directing secretion; that stretch reads MTVFLSFAFFAAILTHIGC. Residues 81–119 adopt a coiled-coil conformation; it reads QKLQHLEHVMENYTQWLQKLENYIVENMKSEMAQIQQNA. Residues N92, N122, N154, N243, and N294 are each glycosylated (N-linked (GlcNAc...) asparagine). A coiled-coil region spans residues 153–261; sequence LNQTSRLEIQ…LELMDTVHNL (109 aa). The 221-residue stretch at 276–496 folds into the Fibrinogen C-terminal domain; that stretch reads REEEKPFRDC…STTMMIRPLD (221 aa). Disulfide bonds link C285-C314 and C438-C451.

In terms of assembly, homooligomer. Interacts with TEK/TIE2. Interacts with SVEP1/polydom. Interacts with THBD; this interaction significantly inhibits the generation of activated PC and TAFIa/CPB2 by the thrombin/thrombomodulin complex.

It is found in the secreted. Binds and activates TIE2 receptor by inducing its tyrosine phosphorylation. Implicated in endothelial developmental processes later and distinct from that of VEGF. Appears to play a crucial role in mediating reciprocal interactions between the endothelium and surrounding matrix and mesenchyme. Mediates blood vessel maturation/stability. It may play an important role in the heart early development. The protein is Angiopoietin-1 (Angpt1) of Rattus norvegicus (Rat).